We begin with the raw amino-acid sequence, 499 residues long: ADP,ATP carrier protein 5 (499 aa).

The next 11 helical transmembrane spans lie at 25–45 (LGKF…QNVL), 61–81 (IAGF…VIIY), 93–113 (IFYY…FVIY), 148–168 (YIVY…LLFW), 183–203 (FYTL…FLMM), 223–243 (ITLV…CCLL), 286–306 (LWLL…VEAV), 327–347 (LYIL…NNIM), 356–376 (AVIS…LIVF), 380–400 (ILSL…VSIG), and 468–488 (LISP…IYAV).

This sequence belongs to the ADP/ATP translocase tlc family.

The protein localises to the cell membrane. Its function is as follows. Provides the rickettsial cell with host ATP in exchange for rickettsial ADP. This is an obligate exchange system. This energy acquiring activity is an important component of rickettsial parasitism. The polypeptide is ADP,ATP carrier protein 5 (tlcE) (Rickettsia conorii (strain ATCC VR-613 / Malish 7)).